A 695-amino-acid polypeptide reads, in one-letter code: Scarecrow-like protein 31 (695 aa).

2 disordered regions span residues 105 to 136 and 234 to 260; these read VISD…NSSN and ISKT…RSKQ. Over residues 113-136 the composition is skewed to low complexity; that stretch reads SSIPNNSITTSSSSNSGDYSNSSN. Residues 233–266 adopt a coiled-coil conformation; sequence AISKTRKNHHEREEEEDDLEEARRRSKQFAVNEE. Residues 306–693 enclose the GRAS domain; the sequence is AKKKSRAVDF…RILFSSSCWV (388 aa). The segment at 313–377 is leucine repeat I (LRI); sequence VDFRTLLTLC…EGSTGTMIQS (65 aa). The interval 396-461 is VHIID; that stretch reads YSVFLSASPF…PGLRKLRITG (66 aa). The VHIID signature appears at 427–431; it reads LHIVD. The interval 477–509 is leucine repeat II (LRII); it reads DTGRRLTEYCKRFGVPFEYNAIASKNWETIKME. The segment at 519 to 614 is PFYRE; sequence LAVNAVLRFK…GEFYGREVMN (96 aa). The interval 617-693 is SAW; the sequence is ACEGVDRVER…RILFSSSCWV (77 aa).

The protein belongs to the GRAS family. In terms of tissue distribution, expressed in seedlings, roots, cotyledons, leaves and sepals.

Its subcellular location is the nucleus. Probable transcription factor involved in plant development. This chain is Scarecrow-like protein 31 (SCL31), found in Arabidopsis thaliana (Mouse-ear cress).